Consider the following 329-residue polypeptide: MSAAPEGRRMLRLEVRNAETPIERKPEWIKTKARMGPEYQALQQLVKTEDLHTVCQEAACPNIYECWEDREATFLIGGSQCTRRCDFCQIDTGKPADYDTDEPRRVADSVRRMGLRYATVTGVARDDLPDEGAWLHAETVRRIHADNPGTGVEILATDFSGNPDLLAEVFSSRPEVFAHNVETVPRIFKRIRPAFRYERSLDVITQGRDADLITKSNLILGMGETREEVSEALADLHDAGCDIITVTQYLRPSPRHLPVARWVRPEEFVEIKAEAEAIGFLGVLAGPLVRSSYRAGRLYAQSMSAKGRELPASLAHLADPANGFAQAVG.

7 residues coordinate [4Fe-4S] cluster: Cys-55, Cys-60, Cys-66, Cys-81, Cys-85, Cys-88, and Ser-292. The Radical SAM core domain maps to 67-281 (WEDREATFLI…KAEAEAIGFL (215 aa)).

This sequence belongs to the radical SAM superfamily. Lipoyl synthase family. [4Fe-4S] cluster serves as cofactor.

It localises to the cytoplasm. The catalysed reaction is [[Fe-S] cluster scaffold protein carrying a second [4Fe-4S](2+) cluster] + N(6)-octanoyl-L-lysyl-[protein] + 2 oxidized [2Fe-2S]-[ferredoxin] + 2 S-adenosyl-L-methionine + 4 H(+) = [[Fe-S] cluster scaffold protein] + N(6)-[(R)-dihydrolipoyl]-L-lysyl-[protein] + 4 Fe(3+) + 2 hydrogen sulfide + 2 5'-deoxyadenosine + 2 L-methionine + 2 reduced [2Fe-2S]-[ferredoxin]. Its pathway is protein modification; protein lipoylation via endogenous pathway; protein N(6)-(lipoyl)lysine from octanoyl-[acyl-carrier-protein]: step 2/2. Catalyzes the radical-mediated insertion of two sulfur atoms into the C-6 and C-8 positions of the octanoyl moiety bound to the lipoyl domains of lipoate-dependent enzymes, thereby converting the octanoylated domains into lipoylated derivatives. This is Lipoyl synthase from Clavibacter sepedonicus (Clavibacter michiganensis subsp. sepedonicus).